A 424-amino-acid chain; its full sequence is Putative histone deacetylase complex subunit cti6 (424 aa).

Disordered regions lie at residues 1-49, 117-155, 170-341, and 381-405; these read MPSN…GEVT, SKYLGNGKPIEASQTEESSSTPPSPATKKSSKQRLTMNS, KEKS…PDGT, and AQSAGNQSSTKSSKEGPEEEKETLR. Residues 48 to 103 form a PHD-type zinc finger; it reads VTRCVCGIVESDDEASDGGLYIQCDQCSVWQHGNCVGFADESEVPEVYYCEICHPE. A compositionally biased stretch (low complexity) spans 127 to 137; that stretch reads EASQTEESSST. Residue Ser187 is modified to Phosphoserine. Over residues 241–256 the composition is skewed to acidic residues; the sequence is DAPEEETVDTVEEIAD. Residues 257 to 266 are compositionally biased toward basic and acidic residues; sequence EEKHSVKEES. Residues 272 to 287 are compositionally biased toward low complexity; that stretch reads QSSQQSTITSISTTTR. Residues 294 to 303 are compositionally biased toward basic and acidic residues; the sequence is REAAAEDKAD. Residues 313-324 show a composition bias toward basic residues; sequence SKTRKVGGRRGK. Over residues 392 to 405 the composition is skewed to basic and acidic residues; sequence SSKEGPEEEKETLR.

It is found in the cytoplasm. The protein localises to the nucleus. In terms of biological role, could be a component of the RPD3C(L) histone deacetylase complex (HDAC). This Schizosaccharomyces pombe (strain 972 / ATCC 24843) (Fission yeast) protein is Putative histone deacetylase complex subunit cti6 (cti6).